A 559-amino-acid polypeptide reads, in one-letter code: MTSLREFRKLCCDIYHASGYKEKSKLIRDFITDRDDTDTYLIIKLLLPGLDDRMYNMNDKQIIKLYSIIFKQSQEDMLQDLGYGYIGDTIRTFFKENTEIRPRDKSILTLEEVDSFLTTLSSVTKESHQIKLLTDIASVCTCNDLKCVVMLIDKDLKIKAGPRYVLNAISPHAYDVFRKSNNLKEIIENAAKQNLDSISISVMTPINPMLAESCDSVNKAFKKFPSGMFAEVKYDGERVQVHKKNNEFAFFSRNMKPVLSHKVDYLKEYIPKAFKKATSIVLDSEIVLVDEHNVPLPFGSLGIHKKKEYKNSNMCLFVFDCLYFDGFDMTDIPLYERRSFLKDVMVEIPNRIVFSELTNISNESQLTDVLDDALTRKLEGLVLKDINGVYEPGKRRWLKIKRDYLNEGSMADSADLVVLGAYYGKGGKGGIMAVFLMGCYDDESGKWKTVTKCSGHDDNTLRVLQDQLTMVKINKDPKKIPEWLVVNKIYIPDFVVDDPKQSQIWEISGAEFTSSKSHTANGISIRFPRFTRIREDKTWKESTHLNDLVNLTKSLNSYI.

Glu231 is an ATP binding site. The active-site N6-AMP-lysine intermediate is Lys233. Residues Arg238 and Glu285 each coordinate ATP. The Mg(2+) site is built by Glu285 and Glu379. 2 residues coordinate ATP: Lys384 and Lys399.

Belongs to the ATP-dependent DNA ligase family. In terms of assembly, interacts with host TOP2A and TOP2B. It depends on Mg(2+) as a cofactor.

Its subcellular location is the host cytoplasm. The catalysed reaction is ATP + (deoxyribonucleotide)n-3'-hydroxyl + 5'-phospho-(deoxyribonucleotide)m = (deoxyribonucleotide)n+m + AMP + diphosphate.. Its function is as follows. DNA ligase that seals nicks in double-stranded DNA during DNA replication, DNA recombination and DNA repair. Recruits cellular topoisomerase II to sites of viral replication and assembly. The chain is DNA ligase (OPG180) from Monkeypox virus.